The primary structure comprises 129 residues: Small ribosomal subunit protein uS11 (129 aa).

This sequence belongs to the universal ribosomal protein uS11 family. Part of the 30S ribosomal subunit. Interacts with proteins S7 and S18. Binds to IF-3.

Located on the platform of the 30S subunit, it bridges several disparate RNA helices of the 16S rRNA. Forms part of the Shine-Dalgarno cleft in the 70S ribosome. The protein is Small ribosomal subunit protein uS11 of Francisella tularensis subsp. mediasiatica (strain FSC147).